The chain runs to 124 residues: Small ribosomal subunit protein bS6 (124 aa).

The tract at residues 101–124 (IMMKEVQREEARKSAQSDAPAVAA) is disordered. A compositionally biased stretch (basic and acidic residues) spans 105 to 115 (EVQREEARKSA).

It belongs to the bacterial ribosomal protein bS6 family.

Binds together with bS18 to 16S ribosomal RNA. The chain is Small ribosomal subunit protein bS6 from Polynucleobacter asymbioticus (strain DSM 18221 / CIP 109841 / QLW-P1DMWA-1) (Polynucleobacter necessarius subsp. asymbioticus).